Consider the following 153-residue polypeptide: 6,7-dimethyl-8-ribityllumazine synthase (153 aa).

5-amino-6-(D-ribitylamino)uracil contacts are provided by residues Trp-22, Ser-56–Glu-58, and Ala-80–Ile-82. Ala-85–Thr-86 is a binding site for (2S)-2-hydroxy-3-oxobutyl phosphate. His-88 functions as the Proton donor in the catalytic mechanism. Leu-113 is a 5-amino-6-(D-ribitylamino)uracil binding site. Arg-127 provides a ligand contact to (2S)-2-hydroxy-3-oxobutyl phosphate.

This sequence belongs to the DMRL synthase family.

The enzyme catalyses (2S)-2-hydroxy-3-oxobutyl phosphate + 5-amino-6-(D-ribitylamino)uracil = 6,7-dimethyl-8-(1-D-ribityl)lumazine + phosphate + 2 H2O + H(+). It functions in the pathway cofactor biosynthesis; riboflavin biosynthesis; riboflavin from 2-hydroxy-3-oxobutyl phosphate and 5-amino-6-(D-ribitylamino)uracil: step 1/2. Catalyzes the formation of 6,7-dimethyl-8-ribityllumazine by condensation of 5-amino-6-(D-ribitylamino)uracil with 3,4-dihydroxy-2-butanone 4-phosphate. This is the penultimate step in the biosynthesis of riboflavin. This chain is 6,7-dimethyl-8-ribityllumazine synthase, found in Herpetosiphon aurantiacus (strain ATCC 23779 / DSM 785 / 114-95).